We begin with the raw amino-acid sequence, 243 residues long: GrpE protein homolog, mitochondrial (243 aa).

The tract at residues 56–79 is disordered; sequence KKEEPKDENDAAAAEEDANLTEEQ.

This sequence belongs to the GrpE family. In terms of assembly, component of the PAM complex, at least composed of mtHsp70, MGE1, TIM44, PAM16, PAM17 and PAM18.

The protein localises to the mitochondrion matrix. Functionally, essential component of the PAM complex, a complex required for the translocation of transit peptide-containing proteins from the inner membrane into the mitochondrial matrix in an ATP-dependent manner. Seems to control the nucleotide-dependent binding of SSC1 to substrate proteins. In Kluyveromyces lactis (strain ATCC 8585 / CBS 2359 / DSM 70799 / NBRC 1267 / NRRL Y-1140 / WM37) (Yeast), this protein is GrpE protein homolog, mitochondrial (mge1).